Reading from the N-terminus, the 83-residue chain is Putative membrane protein insertion efficiency factor (83 aa).

Positions 63-83 (GGNDPVPDHFSLRRNKTDISD) are disordered. The segment covering 68–83 (VPDHFSLRRNKTDISD) has biased composition (basic and acidic residues).

This sequence belongs to the UPF0161 family.

It localises to the cell membrane. Its function is as follows. Could be involved in insertion of integral membrane proteins into the membrane. In Streptococcus agalactiae serotype III (strain NEM316), this protein is Putative membrane protein insertion efficiency factor.